Reading from the N-terminus, the 1258-residue chain is MITSELPVLQDSTNETTAHSDAGSELEETEVKGKRKRGRPGRPPSTNKKPRKSPGEKSRIEAGIRGAGRGRANGHPQQNGDGDPVTLFEVVKLGKSAMQSVVDDWIELYKQDRDIALLDLINFFIQCSGCRGTVRIEMFRNMQNAEIIRKMTEEFDEDSGDYPLTMPGPQWKKFRSNFCEFIGVLIRQCQYSIIYDEYMMDTVISLLTGLSDSQVRAFRHTSTLAAMKLMTALVNVALNLSIHQDNTQRQYEAERNKMIGKRANERLELLLQKRKELQENQDEIENMMNSIFKGIFVHRYRDAIAEIRAICIEEIGVWMKMYSDAFLNDSYLKYVGWTLHDRQGEVRLKCLKALQSLYTNRELFPKLELFTNRFKDRIVSMTLDKEYDVAVEAIRLVTLILHGSEEALSNEDCENVYHLVYSAHRPVAVAAGEFLHKKLFSRHDPQAEEALAKRRGRNSPNGNLIRMLVLFFLESELHEHAAYLVDSLWESSQELLKDWECMTELLLEEPVQGEEAMSDRQESALIELMVCTIRQAAEAHPPVGRGTGKRVLTAKERKTQIDDRNKLTEHFIITLPMLLSKYSADAEKVANLLQIPQYFDLEIYSTGRMEKHLDALLKQIKFVVEKHVESDVLEACSKTYSILCSEEYTIQNRVDIARSQLIDEFVDRFNHSVEDLLQEGEEADDDDIYNVLSTLKRLTSFHNAHDLTKWDLFGNCYRLLKTGIEHGAMPEQIVVQALQCSHYSILWQLVKITDGSPSKEDLLVLRKTVKSFLAVCQQCLSNVNTPVKEQAFMLLCDLLMIFSHQLMTGGREGLQPLVFNPDTGLQSELLSFVMDHVFIDQDEENQSMEGDEEDEANKIEALHKRRNLLAAFSKLIIYDIVDMHAAADIFKHYMKYYNDYGDIIKETLSKTRQIDKIQCAKTLILSLQQLFNELVQEQGPNLDRTSAHVSGIKELARRFALTFGLDQIKTREAVATLHKDGIEFAFKYQNQKGQEYPPPNLAFLEVLSEFSSKLLRQDKKTVHSYLEKFLTEQMMERREDVWLPLISYRNSLVTGGEDDRMSVNSGSSSSKTSSVRSKKGRPPLHRKRVEDESLDNTWLNRTDTMIQTPGPLPTPQLTSTVLRENSRPMGEQIQEPESEHGSEPDFLHNPQMQISWLGQPKLEDLNRKDRTGMNYMKVRAGVRHAVRGLMEEDAEPIFEDVMMSSRSQLEDMNEEFEDTMVIDLPPSRNRRERAELRPDFFDSAAIIEDDSGFGMPMF.

The interval 1–59 is disordered; it reads MITSELPVLQDSTNETTAHSDAGSELEETEVKGKRKRGRPGRPPSTNKKPRKSPGEKSR. Residues 10 to 19 show a composition bias toward polar residues; that stretch reads QDSTNETTAH. Residue S24 is modified to Phosphoserine. The SCD domain maps to 296-381; that stretch reads FVHRYRDAIA…NRFKDRIVSM (86 aa). 3 positions are modified to phosphoserine: S756, S1062, and S1065. A disordered region spans residues 1055 to 1148; it reads GGEDDRMSVN…EHGSEPDFLH (94 aa). A compositionally biased stretch (low complexity) spans 1062 to 1075; sequence SVNSGSSSSKTSSV. Residues 1076 to 1087 are compositionally biased toward basic residues; sequence RSKKGRPPLHRK. S1093 carries the post-translational modification Phosphoserine. A compositionally biased stretch (polar residues) spans 1095-1106; the sequence is DNTWLNRTDTMI. Residues 1137 to 1146 show a composition bias toward basic and acidic residues; that stretch reads ESEHGSEPDF. K1161 participates in a covalent cross-link: Glycyl lysine isopeptide (Lys-Gly) (interchain with G-Cter in SUMO2).

Belongs to the SCC3 family. As to quaternary structure, cohesin complexes are composed of a heterodimer between a SMC1 protein (SMC1A or SMC1B) and SMC3, which are attached via their hinge domain, and RAD21 which link them at their heads, and one STAG protein (STAG1, STAG2 or STAG3). In cohesin complexes, STAG1 is mutually exclusive with STAG2 and STAG3. Interacts directly with RAD21 in cohesin complex. The cohesin complex interacts with the cohesin loading complex subunits NIPBL/Scc2 (via HEAT repeats) and MAU2/Scc4. NIPBL directly contacts all members of the complex, RAD21, SMC1A/B, SMC3 and STAG1. In terms of processing, phosphorylated by PLK1. The large dissociation of cohesin from chromosome arms during prophase is partly due to its phosphorylation.

The protein resides in the nucleus. Its subcellular location is the chromosome. In terms of biological role, component of cohesin complex, a complex required for the cohesion of sister chromatids after DNA replication. The cohesin complex apparently forms a large proteinaceous ring within which sister chromatids can be trapped. At anaphase, the complex is cleaved and dissociates from chromatin, allowing sister chromatids to segregate. The cohesin complex may also play a role in spindle pole assembly during mitosis. This is Cohesin subunit SA-1 (Stag1) from Mus musculus (Mouse).